The primary structure comprises 63 residues: Large ribosomal subunit protein bL32 (63 aa).

This sequence belongs to the bacterial ribosomal protein bL32 family.

In Lactobacillus delbrueckii subsp. bulgaricus (strain ATCC 11842 / DSM 20081 / BCRC 10696 / JCM 1002 / NBRC 13953 / NCIMB 11778 / NCTC 12712 / WDCM 00102 / Lb 14), this protein is Large ribosomal subunit protein bL32.